The chain runs to 549 residues: Cytoplasmic trehalase (549 aa).

Substrate is bound by residues R168, W175 to D176, N212, R221 to Q223, R292 to E294, and G324. Residues D326 and E509 each act as proton donor/acceptor in the active site. E525 contacts substrate.

This sequence belongs to the glycosyl hydrolase 37 family. In terms of assembly, monomer.

It is found in the cytoplasm. The catalysed reaction is alpha,alpha-trehalose + H2O = alpha-D-glucose + beta-D-glucose. The protein operates within glycan degradation; trehalose degradation; D-glucose from alpha,alpha-trehalose: step 1/1. Functionally, hydrolyzes trehalose to glucose. Could be involved, in cells returning to low osmolarity conditions, in the utilization of the accumulated cytoplasmic trehalose, which was synthesized in response to high osmolarity. This is Cytoplasmic trehalase from Escherichia coli O157:H7.